Here is a 77-residue protein sequence, read N- to C-terminus: U8-lycotoxin-Ls1q (77 aa).

The N-terminal stretch at methionine 1 to alanine 20 is a signal peptide. Residues glutamine 21–lysine 26 constitute a propeptide that is removed on maturation.

This sequence belongs to the neurotoxin 19 (CSTX) family. 08 (U8-Lctx) subfamily. In terms of processing, contains 4 disulfide bonds. Expressed by the venom gland.

Its subcellular location is the secreted. The polypeptide is U8-lycotoxin-Ls1q (Lycosa singoriensis (Wolf spider)).